A 415-amino-acid polypeptide reads, in one-letter code: ATP-dependent RNA helicase RhlB (415 aa).

The Q motif motif lies at 9 to 37 (QRFSDLSLHPIVRDTLAKKGFDFCTPIQA). Residues 40–218 (LPISLNGRDV…FEDMNDPEYI (179 aa)) form the Helicase ATP-binding domain. 53–60 (AQTGTGKT) provides a ligand contact to ATP. The short motif at 164–167 (DEAD) is the DEAD box element. The 149-residue stretch at 241–389 (DKMALLLTLM…VSQYETEALL (149 aa)) folds into the Helicase C-terminal domain.

Belongs to the DEAD box helicase family. RhlB subfamily. Component of the RNA degradosome, which is a multiprotein complex involved in RNA processing and mRNA degradation.

It is found in the cytoplasm. It carries out the reaction ATP + H2O = ADP + phosphate + H(+). In terms of biological role, DEAD-box RNA helicase involved in RNA degradation. Has RNA-dependent ATPase activity and unwinds double-stranded RNA. The protein is ATP-dependent RNA helicase RhlB of Haemophilus influenzae (strain PittEE).